The primary structure comprises 467 residues: uncharacterized protein (467 aa).

Residues 1–60 (MVRVSRGCQSCVDAKLQSTPSPSPSKSPSPTESPEQCLQKRQSGEQVVLPSRPFPRTSPR) are disordered.

Involved in osmoadaptation. This is an uncharacterized protein from Emericella nidulans (strain FGSC A4 / ATCC 38163 / CBS 112.46 / NRRL 194 / M139) (Aspergillus nidulans).